The chain runs to 397 residues: Riboflavin biosynthesis protein RibBA (397 aa).

Residues 1–199 (MFHRIEEALE…IEDLIAYRRH (199 aa)) are DHBP synthase. Residues 26–27 (RE), Asp31, 138–142 (RAGHT), and Glu162 each bind D-ribulose 5-phosphate. Position 27 (Glu27) interacts with Mg(2+). His141 provides a ligand contact to Mg(2+). Residues 200 to 397 (HETLVTREVE…VNKLGHLLNL (198 aa)) are GTP cyclohydrolase II. 250 to 254 (RVHSE) is a GTP binding site. Residues Cys255, Cys266, and Cys268 each coordinate Zn(2+). Residues Gln271, 293-295 (EGR), and Thr315 each bind GTP. Asp327 functions as the Proton acceptor; for GTP cyclohydrolase activity in the catalytic mechanism. The active-site Nucleophile; for GTP cyclohydrolase activity is the Arg329. Residues Thr350 and Lys355 each coordinate GTP.

It in the N-terminal section; belongs to the DHBP synthase family. This sequence in the C-terminal section; belongs to the GTP cyclohydrolase II family. Mg(2+) is required as a cofactor. It depends on Mn(2+) as a cofactor. The cofactor is Zn(2+).

The enzyme catalyses D-ribulose 5-phosphate = (2S)-2-hydroxy-3-oxobutyl phosphate + formate + H(+). The catalysed reaction is GTP + 4 H2O = 2,5-diamino-6-hydroxy-4-(5-phosphoribosylamino)-pyrimidine + formate + 2 phosphate + 3 H(+). The protein operates within cofactor biosynthesis; riboflavin biosynthesis; 2-hydroxy-3-oxobutyl phosphate from D-ribulose 5-phosphate: step 1/1. It functions in the pathway cofactor biosynthesis; riboflavin biosynthesis; 5-amino-6-(D-ribitylamino)uracil from GTP: step 1/4. In terms of biological role, catalyzes the conversion of D-ribulose 5-phosphate to formate and 3,4-dihydroxy-2-butanone 4-phosphate. Functionally, catalyzes the conversion of GTP to 2,5-diamino-6-ribosylamino-4(3H)-pyrimidinone 5'-phosphate (DARP), formate and pyrophosphate. The protein is Riboflavin biosynthesis protein RibBA of Bacillus cereus (strain G9842).